The primary structure comprises 445 residues: Tubulin beta-1 chain (445 aa).

The GTP site is built by Q11, E69, S138, G142, T143, G144, N204, and N226. E69 contacts Mg(2+). The disordered stretch occupies residues 422-445 (QYQDAGMDDEYGEEYEDEAPAEEE). Acidic residues predominate over residues 427–445 (GMDDEYGEEYEDEAPAEEE).

Belongs to the tubulin family. Dimer of alpha and beta chains. A typical microtubule is a hollow water-filled tube with an outer diameter of 25 nm and an inner diameter of 15 nM. Alpha-beta heterodimers associate head-to-tail to form protofilaments running lengthwise along the microtubule wall with the beta-tubulin subunit facing the microtubule plus end conferring a structural polarity. Microtubules usually have 13 protofilaments but different protofilament numbers can be found in some organisms and specialized cells. The cofactor is Mg(2+).

The protein localises to the cytoplasm. Its subcellular location is the cytoskeleton. Functionally, tubulin is the major constituent of microtubules, a cylinder consisting of laterally associated linear protofilaments composed of alpha- and beta-tubulin heterodimers. Microtubules grow by the addition of GTP-tubulin dimers to the microtubule end, where a stabilizing cap forms. Below the cap, tubulin dimers are in GDP-bound state, owing to GTPase activity of alpha-tubulin. The protein is Tubulin beta-1 chain (TUB1) of Colletotrichum graminicola (Maize anthracnose fungus).